A 108-amino-acid polypeptide reads, in one-letter code: Transcription factor S (108 aa).

8 residues coordinate Zn(2+): C5, C8, C21, C24, C69, C72, C97, and C100. Residues C5–C24 form a C4-type zinc finger. Residues T65–R105 form a TFIIS-type zinc finger.

The protein belongs to the archaeal RpoM/eukaryotic RPA12/RPB9/RPC11 RNA polymerase family.

Induces RNA cleavage activity in the RNA polymerase. In its presence, the cleavage activity of the RNA polymerase truncates the RNA back to position +15 in a stepwise manner by releasing mainly dinucleotides from the 3'-end of the nascent RNA. The truncated RNAs are able to continue elongation. Involved in transcriptional proofreading and fidelity. Misincorporation of nucleotides during elongation of transcription leads to arrested elongation complexes which are rescued by TFS-promoted removal of a dinucleotide from the 3'-end. TFS is able to induce a cleavage resynthesis cycle in stalled elongation complexes (resulting from the next missing nucleotide or a reduced incorporation rate of a wrong nucleotide) preventing misincorporation and enabling proofreading in a post-incorporation manner. Pausing of elongation complexes is the main determinant of TFS-induced RNA cleavage. In Methanocaldococcus jannaschii (strain ATCC 43067 / DSM 2661 / JAL-1 / JCM 10045 / NBRC 100440) (Methanococcus jannaschii), this protein is Transcription factor S.